A 404-amino-acid chain; its full sequence is NADH-quinone oxidoreductase subunit D 2 (404 aa).

The protein belongs to the complex I 49 kDa subunit family. As to quaternary structure, NDH-1 is composed of 14 different subunits. Subunits NuoB, C, D, E, F, and G constitute the peripheral sector of the complex.

The protein resides in the cell inner membrane. The catalysed reaction is a quinone + NADH + 5 H(+)(in) = a quinol + NAD(+) + 4 H(+)(out). NDH-1 shuttles electrons from NADH, via FMN and iron-sulfur (Fe-S) centers, to quinones in the respiratory chain. The immediate electron acceptor for the enzyme in this species is believed to be ubiquinone. Couples the redox reaction to proton translocation (for every two electrons transferred, four hydrogen ions are translocated across the cytoplasmic membrane), and thus conserves the redox energy in a proton gradient. This is NADH-quinone oxidoreductase subunit D 2 from Sinorhizobium medicae (strain WSM419) (Ensifer medicae).